Consider the following 230-residue polypeptide: Aquaporin Z (230 aa).

The next 2 membrane-spanning stretches (helical) occupy residues 9–29 and 35–55; these read AELIGTFWLVLGGCGSAVLAA and IGVLGVAFAFGLTVLTMAFAI. The NPA 1 motif lies at 64–66; that stretch reads NPA. 3 helical membrane passes run 83–103, 131–151, and 160–180; these read LPYVIAQVIGAILAAGVIYLI, LGAGFVSEVVMTAMFLVVIMG, and GFAPIAIGLALTLIHLISIPV. Positions 186–188 match the NPA 2 motif; sequence NPA. A helical membrane pass occupies residues 194-214; that stretch reads ALFVGGWALQQLWLFWVAPLI.

This sequence belongs to the MIP/aquaporin (TC 1.A.8) family. Homotetramer.

Its subcellular location is the cell inner membrane. The catalysed reaction is H2O(in) = H2O(out). In terms of biological role, channel that permits osmotically driven movement of water in both directions. It is involved in the osmoregulation and in the maintenance of cell turgor during volume expansion in rapidly growing cells. It mediates rapid entry or exit of water in response to abrupt changes in osmolarity. In Pseudomonas putida (strain ATCC 47054 / DSM 6125 / CFBP 8728 / NCIMB 11950 / KT2440), this protein is Aquaporin Z.